We begin with the raw amino-acid sequence, 160 residues long: Cyclic pyranopterin monophosphate synthase (160 aa).

Residues 77-79 (LCH) and 115-116 (ME) contribute to the substrate site. Asp130 is a catalytic residue.

This sequence belongs to the MoaC family. As to quaternary structure, homohexamer; trimer of dimers.

It carries out the reaction (8S)-3',8-cyclo-7,8-dihydroguanosine 5'-triphosphate = cyclic pyranopterin phosphate + diphosphate. It functions in the pathway cofactor biosynthesis; molybdopterin biosynthesis. Catalyzes the conversion of (8S)-3',8-cyclo-7,8-dihydroguanosine 5'-triphosphate to cyclic pyranopterin monophosphate (cPMP). This Parvibaculum lavamentivorans (strain DS-1 / DSM 13023 / NCIMB 13966) protein is Cyclic pyranopterin monophosphate synthase.